Reading from the N-terminus, the 66-residue chain is Large ribosomal subunit protein bL33c (66 aa).

It belongs to the bacterial ribosomal protein bL33 family.

Its subcellular location is the plastid. The protein resides in the chloroplast. This Agrostis stolonifera (Creeping bentgrass) protein is Large ribosomal subunit protein bL33c.